The sequence spans 208 residues: Small ribosomal subunit protein uS3 (208 aa).

A KH type-2 domain is found at 17 to 86; that stretch reads IDEYLEKELR…NPQIEVEEIK (70 aa).

Belongs to the universal ribosomal protein uS3 family. In terms of assembly, part of the 30S ribosomal subunit.

In terms of biological role, binds the lower part of the 30S subunit head. This is Small ribosomal subunit protein uS3 from Thermococcus onnurineus (strain NA1).